The primary structure comprises 262 residues: Acyl-[acyl-carrier-protein]--UDP-N-acetylglucosamine O-acyltransferase (262 aa).

Belongs to the transferase hexapeptide repeat family. LpxA subfamily. Homotrimer.

The protein localises to the cytoplasm. It catalyses the reaction a (3R)-hydroxyacyl-[ACP] + UDP-N-acetyl-alpha-D-glucosamine = a UDP-3-O-[(3R)-3-hydroxyacyl]-N-acetyl-alpha-D-glucosamine + holo-[ACP]. The protein operates within glycolipid biosynthesis; lipid IV(A) biosynthesis; lipid IV(A) from (3R)-3-hydroxytetradecanoyl-[acyl-carrier-protein] and UDP-N-acetyl-alpha-D-glucosamine: step 1/6. In terms of biological role, involved in the biosynthesis of lipid A, a phosphorylated glycolipid that anchors the lipopolysaccharide to the outer membrane of the cell. This chain is Acyl-[acyl-carrier-protein]--UDP-N-acetylglucosamine O-acyltransferase, found in Campylobacter concisus (strain 13826).